We begin with the raw amino-acid sequence, 91 residues long: Proline, histidine and glycine-rich protein 1 (91 aa).

Positions 1 to 91 (MHPGGKGHCG…HCGPHPGPHH (91 aa)) are disordered. 3 stretches are compositionally biased toward gly residues: residues 33–42 (HPGHGPGHCP), 49–63 (GHGGPSHGHGPGHCP), and 70–82 (GHGGPSHGHGPGH).

The polypeptide is Proline, histidine and glycine-rich protein 1 (Phgr1) (Mus musculus (Mouse)).